The chain runs to 226 residues: Ribonuclease 3 (226 aa).

The RNase III domain occupies 7-134 (KQNLKKKYGI…FNGALFLDQG (128 aa)). Glu47 is a Mg(2+) binding site. Asp51 is a catalytic residue. Mg(2+) is bound by residues Asp120 and Glu123. Glu123 is a catalytic residue. The DRBM domain occupies 160–226 (DYKTELQERL…AAQAALDKNK (67 aa)). The tract at residues 201–226 (KVSEGQGRNKKAAEQQAAQAALDKNK) is disordered. The segment covering 214–226 (EQQAAQAALDKNK) has biased composition (low complexity).

Belongs to the ribonuclease III family. Homodimer. Mg(2+) serves as cofactor.

It localises to the cytoplasm. It catalyses the reaction Endonucleolytic cleavage to 5'-phosphomonoester.. In terms of biological role, digests double-stranded RNA. Involved in the processing of primary rRNA transcript to yield the immediate precursors to the large and small rRNAs (23S and 16S). Processes some mRNAs, and tRNAs when they are encoded in the rRNA operon. Processes pre-crRNA and tracrRNA of type II CRISPR loci if present in the organism. The sequence is that of Ribonuclease 3 from Lactobacillus johnsonii (strain CNCM I-12250 / La1 / NCC 533).